A 150-amino-acid polypeptide reads, in one-letter code: UPF0178 protein ASA_3749 (150 aa).

The protein belongs to the UPF0178 family.

The protein is UPF0178 protein ASA_3749 of Aeromonas salmonicida (strain A449).